Here is a 124-residue protein sequence, read N- to C-terminus: Alpha-endosulfine (124 aa).

Serine 74 carries the post-translational modification Phosphoserine; by GWL. Residues 99–124 (VTGDHIPTPQDLPQRKNTILTSKLAG) form a disordered region. Polar residues predominate over residues 113-124 (RKNTILTSKLAG).

The protein belongs to the endosulfine family. Post-translationally, phosphorylation at Ser-74 by gwl during mitosis is essential for interaction with ppp2r2d (PR55-delta) and subsequent inactivation of PP2A.

It localises to the cytoplasm. Protein phosphatase inhibitor that specifically inhibits protein phosphatase 2A (PP2A) during mitosis. When phosphorylated at Ser-67 during mitosis, specifically interacts with ppp2r2d (PR55-delta) and inhibits its activity, leading to inactivation of PP2A, an essential condition to keep cyclin-B1-CDK1 activity high during M phase. The protein is Alpha-endosulfine (ensa) of Danio rerio (Zebrafish).